Consider the following 274-residue polypeptide: Ommochrome-binding protein (274 aa).

An N-terminal signal peptide occupies residues 1 to 18; sequence MKLLILTICALHVNQMMA. N-linked (GlcNAc...) asparagine glycosylation occurs at N183.

As to quaternary structure, monomer. As to expression, present in larval hemolymph and synthesized by the fat body.

Functionally, binds to an ommochrome, ommatin D which is a yellow chromophore. May be involved in guiding the chromophore through the hemolymph from the epidermis to the gut. In Manduca sexta (Tobacco hawkmoth), this protein is Ommochrome-binding protein.